Consider the following 299-residue polypeptide: Large ribosomal subunit protein uL29m (299 aa).

Belongs to the universal ribosomal protein uL29 family. In terms of assembly, component of the mitochondrial large ribosomal subunit. Mature mitochondrial ribosomes consist of a small (37S) and a large (54S) subunit. The 37S subunit contains at least 33 different proteins and 1 molecule of RNA (15S). The 54S subunit contains at least 45 different proteins and 1 molecule of RNA (21S).

The protein localises to the mitochondrion. In Scheffersomyces stipitis (strain ATCC 58785 / CBS 6054 / NBRC 10063 / NRRL Y-11545) (Yeast), this protein is Large ribosomal subunit protein uL29m (MRPL4).